Consider the following 462-residue polypeptide: MFASIKDILKNPILNSNVTINGWIRTKRSNGKIGFIEINDGSTLKGIQAVINEEENQFSEKDLKKLTTGTSISLTGLLVESPAKGQNYEIKTHSFNVIGETDPETYPLQKKRHSFEFLREIPHLRIRTNTFGAIARVRNKISYKIHEYFQKNGFFYINTPIITSNDGEGAGEMFRVSTLKFNKLNNALSNIDFKDDFFGKEAFLSVTGQLHGEAYAMALSKIYTFGPTFRAENSNTTRHASEFWMIEPEMAFYKLNDNIALAEDLLKYLLSSILNECSQDMDFLENYIEKGLIKKLENVINSNFEVITYTKAIEILENSKKNFEIKPYWGIDLQTDHERYLTEETFKKPVVVIDYPKNFKAFYMKANKDNKTVKGMDILVPKIGEIIGGSEREDDLQKLENRIKELNLNIEHLNWYLDLRRFGSAPHSGFGLGLERLVQYSTGISNIRDSIPFPRTPKNLYF.

Belongs to the class-II aminoacyl-tRNA synthetase family. Homodimer.

It localises to the cytoplasm. The enzyme catalyses tRNA(Asn) + L-asparagine + ATP = L-asparaginyl-tRNA(Asn) + AMP + diphosphate + H(+). The chain is Asparagine--tRNA ligase from Borreliella burgdorferi (strain ATCC 35210 / DSM 4680 / CIP 102532 / B31) (Borrelia burgdorferi).